The chain runs to 569 residues: Aspartokinase 1, chloroplastic (569 aa).

A chloroplast-targeting transit peptide spans 1-90 (MAATRVRCCH…VDEKGITCVM (90 aa)). The ATP site is built by Lys91, Gly94, and Ser123. Residue Glu207 participates in substrate binding. ACT domains are found at residues 405 to 483 (IAST…AIIS) and 484 to 560 (LIGN…GNGS). Gln413 and Gly415 together coordinate L-lysine. Ser430 contributes to the S-adenosyl-L-methionine binding site. The L-lysine site is built by Val431, Asp432, and Ser437. Residues Ser452 and Arg453 each contribute to the S-adenosyl-L-methionine site.

Belongs to the aspartokinase family. As to quaternary structure, homodimer.

Its subcellular location is the plastid. It localises to the chloroplast. It carries out the reaction L-aspartate + ATP = 4-phospho-L-aspartate + ADP. Its pathway is amino-acid biosynthesis; L-lysine biosynthesis via DAP pathway; (S)-tetrahydrodipicolinate from L-aspartate: step 1/4. The protein operates within amino-acid biosynthesis; L-methionine biosynthesis via de novo pathway; L-homoserine from L-aspartate: step 1/3. It functions in the pathway amino-acid biosynthesis; L-threonine biosynthesis; L-threonine from L-aspartate: step 1/5. With respect to regulation, inhibited by S-adenosyl-L-methionine (SAM) and lysine in a synergistic manner. No inhibition by threonine, leucine or SAM alone, and no activation or inhibition by alanine, cysteine, isoleucine, serine, valine, methionine, glutamine, asparagine, glutamic acid or arginine. Involved in the first step of essential amino acids lysine, threonine, methionine and isoleucine synthesis via the aspartate-family pathway. This is Aspartokinase 1, chloroplastic (AK1) from Arabidopsis thaliana (Mouse-ear cress).